The sequence spans 221 residues: MILFVSATDTGVGKTYISTILVEYLKNKGINVDYIKPIETGVDEKPEDAYKVSSILGKPWQESVIYIFKKPMSPYACSLDEEVDIDVDRIIKTIKEREQKASVLIVEGAGGIAVPIKVKPLIDYAYLIKSLHALPLVVARAYLGTLNHSFLTYFYLKSKDIKPLGFVLNGFDYEEPSQYSNAYILQDMIEEHINIWRLDKNPDENQRINLAENIWKSIANF.

11-16 (GVGKTY) contributes to the ATP binding site. Thr15 lines the Mg(2+) pocket. Lys36 is an active-site residue. Residue Thr40 participates in substrate binding. ATP is bound by residues Asp48 and 107–110 (EGAG). Mg(2+) contacts are provided by Asp48 and Glu107.

Belongs to the dethiobiotin synthetase family. In terms of assembly, homodimer. Mg(2+) serves as cofactor.

It is found in the cytoplasm. It catalyses the reaction (7R,8S)-7,8-diammoniononanoate + CO2 + ATP = (4R,5S)-dethiobiotin + ADP + phosphate + 3 H(+). The protein operates within cofactor biosynthesis; biotin biosynthesis; biotin from 7,8-diaminononanoate: step 1/2. In terms of biological role, catalyzes a mechanistically unusual reaction, the ATP-dependent insertion of CO2 between the N7 and N8 nitrogen atoms of 7,8-diaminopelargonic acid (DAPA, also called 7,8-diammoniononanoate) to form a ureido ring. The polypeptide is ATP-dependent dethiobiotin synthetase BioD (Hydrogenobaculum sp. (strain Y04AAS1)).